The primary structure comprises 321 residues: GDP-L-fucose synthase (321 aa).

14–20 is a binding site for NADP(+); the sequence is GGSGLVG. The active-site Proton donor/acceptor is the tyrosine 143. NADP(+) contacts are provided by residues lysine 147, 170–173, and histidine 186; that span reads PTNV. Lysine 194, tryptophan 208, arginine 215, and aspartate 277 together coordinate substrate.

This sequence belongs to the NAD(P)-dependent epimerase/dehydratase family. Fucose synthase subfamily. Homodimer.

It catalyses the reaction GDP-beta-L-fucose + NADP(+) = GDP-4-dehydro-alpha-D-rhamnose + NADPH + H(+). It functions in the pathway nucleotide-sugar biosynthesis; GDP-L-fucose biosynthesis via de novo pathway; GDP-L-fucose from GDP-alpha-D-mannose: step 2/2. Its function is as follows. Catalyzes the two-step NADP-dependent conversion of GDP-4-dehydro-6-deoxy-D-mannose to GDP-fucose, involving an epimerase and a reductase reaction. The polypeptide is GDP-L-fucose synthase (Mus musculus (Mouse)).